Here is a 1153-residue protein sequence, read N- to C-terminus: Error-prone DNA polymerase (1153 aa).

The segment at 1107–1153 (DELIAPSASTEREAPLNDDRRDHPDLPAQQIRHPRNVRILPPSRDFH) is disordered. Residues 1116–1131 (TEREAPLNDDRRDHPD) are compositionally biased toward basic and acidic residues.

The protein belongs to the DNA polymerase type-C family. DnaE2 subfamily.

The protein resides in the cytoplasm. The catalysed reaction is DNA(n) + a 2'-deoxyribonucleoside 5'-triphosphate = DNA(n+1) + diphosphate. In terms of biological role, DNA polymerase involved in damage-induced mutagenesis and translesion synthesis (TLS). It is not the major replicative DNA polymerase. This Rhodopseudomonas palustris (strain BisA53) protein is Error-prone DNA polymerase.